The primary structure comprises 536 residues: Metal transporter Nramp2 (536 aa).

The segment at 1–37 (MSSPSGGEDSKDDEKDEESNRLLPLSSSSQSQSLQSE) is disordered. A compositionally biased stretch (low complexity) spans 22–36 (LLPLSSSSQSQSLQS). Residue asparagine 38 is glycosylated (N-linked (GlcNAc...) asparagine). Helical transmembrane passes span 76-96 (LWLF…PGNL), 104-124 (AIAG…GLLI), 161-181 (VALI…IQIL), 185-205 (FLPL…FLFL), 213-233 (LEGV…WMCG), 259-279 (AVGV…SALV), 305-325 (VALF…AKGF), 347-367 (YGGG…AAGQ), 400-420 (SFAI…EASL), 435-455 (IPFA…MGVF), 465-485 (AWTI…DFFI), and 492-512 (LFGF…IYLV).

The protein belongs to the NRAMP (TC 2.A.55) family.

Its subcellular location is the membrane. Functionally, probable divalent metal transporter. This Populus trichocarpa (Western balsam poplar) protein is Metal transporter Nramp2.